The primary structure comprises 219 residues: Proteasome subunit beta type-9 (219 aa).

Positions 1–20 (MLRAGAPTAGSFRTEEVHTG) are cleaved as a propeptide — removed in mature form. T21 functions as the Nucleophile in the catalytic mechanism. N6-acetyllysine occurs at positions 53 and 109.

It belongs to the peptidase T1B family. The 26S proteasome consists of a 20S proteasome core and two 19S regulatory subunits. The 20S proteasome core is composed of 28 subunits that are arranged in four stacked rings, resulting in a barrel-shaped structure. The two end rings are each formed by seven alpha subunits, and the two central rings are each formed by seven beta subunits. The catalytic chamber with the active sites is on the inside of the barrel. Component of the immunoproteasome, where it displaces the equivalent housekeeping subunit PSMB6. Component of the spermatoproteasome, a form of the proteasome specifically found in testis. Post-translationally, autocleaved. The resulting N-terminal Thr residue of the mature subunit is responsible for the nucleophile proteolytic activity.

The protein resides in the cytoplasm. It is found in the nucleus. The catalysed reaction is Cleavage of peptide bonds with very broad specificity.. In terms of biological role, the proteasome is a multicatalytic proteinase complex which is characterized by its ability to cleave peptides with Arg, Phe, Tyr, Leu, and Glu adjacent to the leaving group at neutral or slightly basic pH. The proteasome has an ATP-dependent proteolytic activity. This subunit is involved in antigen processing to generate class I binding peptides. The sequence is that of Proteasome subunit beta type-9 (Psmb9) from Mus musculus bactrianus (Southwestern Asian house mouse).